The sequence spans 291 residues: Acetylglutamate kinase (291 aa).

Substrate contacts are provided by residues 61–62 (GG), arginine 83, and asparagine 187.

Belongs to the acetylglutamate kinase family. ArgB subfamily.

The protein localises to the cytoplasm. It catalyses the reaction N-acetyl-L-glutamate + ATP = N-acetyl-L-glutamyl 5-phosphate + ADP. Its pathway is amino-acid biosynthesis; L-arginine biosynthesis; N(2)-acetyl-L-ornithine from L-glutamate: step 2/4. Catalyzes the ATP-dependent phosphorylation of N-acetyl-L-glutamate. This chain is Acetylglutamate kinase, found in Methanoregula boonei (strain DSM 21154 / JCM 14090 / 6A8).